A 440-amino-acid polypeptide reads, in one-letter code: G-protein coupled receptor family C group 5 member C (440 aa).

An N-terminal signal peptide occupies residues 1–22; it reads MATHRTLLMCLGLPLFFPGALA. At 23-49 the chain is on the extracellular side; it reads QNHAPPGCSPDLDPLYYNLCDRSGAWG. The helical transmembrane segment at 50-70 threads the bilayer; sequence IVSEAVAGAGIITTFVLTIIL. Topologically, residues 71-84 are cytoplasmic; that stretch reads VASLPFVQDTKKRS. Residues 85 to 105 traverse the membrane as a helical segment; sequence LLGTQVFFLLGTLGLFCLVFA. Residues 106–119 are Extracellular-facing; that stretch reads CVVKPDFSTCASRR. Residues 120–140 form a helical membrane-spanning segment; that stretch reads FLFGVLFAICFSCLVAHVLSL. The Cytoplasmic segment spans residues 141-155; that stretch reads NFLTRKNHGPRGWVI. A helical transmembrane segment spans residues 156-176; sequence FTVALLLTLVEVIINTEWLII. Residues 177–207 lie on the Extracellular side of the membrane; sequence TLVRGGGQVSPLGNVSADSTMTSPCAIANMD. Asparagine 190 carries N-linked (GlcNAc...) asparagine glycosylation. Residues 208 to 228 form a helical membrane-spanning segment; it reads FVMALIYVMLLLLTAFLGAWP. Topologically, residues 229–240 are cytoplasmic; it reads TLCGRFKRWRKH. A helical membrane pass occupies residues 241-261; it reads GVFVLLTTVISIAIWVVWIVM. Topologically, residues 262–278 are extracellular; that stretch reads YTYGNEQHHSPTWDDPT. A helical membrane pass occupies residues 279 to 299; sequence LAIALAANAWTFVLFYVIPEV. Over 300–440 the chain is Cytoplasmic; the sequence is SQVTKPSPEQ…QVFRNPYVWD (141 aa). Serine 343, serine 382, serine 402, and serine 405 each carry phosphoserine. Tyrosine 413 bears the Phosphotyrosine mark. Phosphothreonine is present on threonine 422.

It belongs to the G-protein coupled receptor 3 family.

Its subcellular location is the cell membrane. This retinoic acid-inducible G-protein coupled receptor provide evidence for a possible interaction between retinoid and G-protein signaling pathways. The chain is G-protein coupled receptor family C group 5 member C (Gprc5c) from Mus musculus (Mouse).